The primary structure comprises 1371 residues: DNA-directed RNA polymerase subunit beta' (1371 aa).

Positions 71, 73, 86, and 89 each coordinate Zn(2+). Positions 461, 463, and 465 each coordinate Mg(2+). The Zn(2+) site is built by Cys803, Cys877, Cys884, and Cys887.

It belongs to the RNA polymerase beta' chain family. In terms of assembly, the RNAP catalytic core consists of 2 alpha, 1 beta, 1 beta' and 1 omega subunit. When a sigma factor is associated with the core the holoenzyme is formed, which can initiate transcription. Requires Mg(2+) as cofactor. Zn(2+) serves as cofactor.

The catalysed reaction is RNA(n) + a ribonucleoside 5'-triphosphate = RNA(n+1) + diphosphate. DNA-dependent RNA polymerase catalyzes the transcription of DNA into RNA using the four ribonucleoside triphosphates as substrates. The protein is DNA-directed RNA polymerase subunit beta' of Thermodesulfovibrio yellowstonii (strain ATCC 51303 / DSM 11347 / YP87).